Consider the following 55-residue polypeptide: Ferredoxin (55 aa).

2 4Fe-4S ferredoxin-type domains span residues 2–27 (HIITDECISCGACAAECPVEAIHEGT) and 28–55 (GKYEVDADTCIDCGACEAVCPTGAVKAE). [4Fe-4S] cluster-binding residues include cysteine 8, cysteine 11, cysteine 14, cysteine 18, cysteine 37, cysteine 40, cysteine 43, and cysteine 47.

Requires [4Fe-4S] cluster as cofactor.

Its function is as follows. Ferredoxins are iron-sulfur proteins that transfer electrons in a wide variety of metabolic reactions. The sequence is that of Ferredoxin from Thermoanaerobacterium thermosaccharolyticum (Clostridium thermosaccharolyticum).